The sequence spans 314 residues: Fibrinogen-like protein 1 (314 aa).

A signal peptide spans 1 to 22 (MGKIYSFVLVAIALMMGREGWA). Residues 28–62 (CLREQVRLRAQVHQLETRVKQQQTMIAQLLHEKEV) are a coiled coil. Residues 76–308 (LGGKRQYADC…SVVMKIRPSD (233 aa)) form the Fibrinogen C-terminal domain. 2 cysteine pairs are disulfide-bonded: cysteine 85-cysteine 114 and cysteine 250-cysteine 263.

As to quaternary structure, homodimer. Interacts (via the Fibrinogen C-terminal domain) with LAG3 (via Ig-like domains 1 and 2). In terms of tissue distribution, mainly expressed in liver. Also expressed in brown adipose tissue.

Its subcellular location is the secreted. In terms of biological role, immune suppressive molecule that inhibits antigen-specific T-cell activation by acting as a major ligand of LAG3. Responsible for LAG3 T-cell inhibitory function. Binds LAG3 independently from MHC class II (MHC-II). Secreted by, and promotes growth of, hepatocytes. In Mus musculus (Mouse), this protein is Fibrinogen-like protein 1 (Fgl1).